Consider the following 430-residue polypeptide: UDP-N-acetylglucosamine 1-carboxyvinyltransferase (430 aa).

Residue K22–N23 participates in phosphoenolpyruvate binding. R102 lines the UDP-N-acetyl-alpha-D-glucosamine pocket. Catalysis depends on C126, which acts as the Proton donor. C126 carries the post-translational modification 2-(S-cysteinyl)pyruvic acid O-phosphothioketal. UDP-N-acetyl-alpha-D-glucosamine-binding positions include R131–L135, K172–V175, D317, and I339.

This sequence belongs to the EPSP synthase family. MurA subfamily.

Its subcellular location is the cytoplasm. It catalyses the reaction phosphoenolpyruvate + UDP-N-acetyl-alpha-D-glucosamine = UDP-N-acetyl-3-O-(1-carboxyvinyl)-alpha-D-glucosamine + phosphate. It functions in the pathway cell wall biogenesis; peptidoglycan biosynthesis. Functionally, cell wall formation. Adds enolpyruvyl to UDP-N-acetylglucosamine. In Rhizobium etli (strain CIAT 652), this protein is UDP-N-acetylglucosamine 1-carboxyvinyltransferase.